The sequence spans 274 residues: DNA damage-inducible protein D (274 aa).

The protein is DNA damage-inducible protein D (dinD) of Escherichia coli (strain K12).